Reading from the N-terminus, the 492-residue chain is N-succinylglutamate 5-semialdehyde dehydrogenase (492 aa).

220 to 225 (GSASTG) provides a ligand contact to NAD(+). Active-site residues include Glu-243 and Cys-277.

The protein belongs to the aldehyde dehydrogenase family. AstD subfamily.

The catalysed reaction is N-succinyl-L-glutamate 5-semialdehyde + NAD(+) + H2O = N-succinyl-L-glutamate + NADH + 2 H(+). It participates in amino-acid degradation; L-arginine degradation via AST pathway; L-glutamate and succinate from L-arginine: step 4/5. Catalyzes the NAD-dependent reduction of succinylglutamate semialdehyde into succinylglutamate. This is N-succinylglutamate 5-semialdehyde dehydrogenase from Salmonella paratyphi C (strain RKS4594).